The chain runs to 309 residues: Ribosomal RNA small subunit methyltransferase H (309 aa).

Residues 33–35 (GGH), Asp53, Phe79, Asp100, and Gln107 each bind S-adenosyl-L-methionine.

It belongs to the methyltransferase superfamily. RsmH family.

Its subcellular location is the cytoplasm. It catalyses the reaction cytidine(1402) in 16S rRNA + S-adenosyl-L-methionine = N(4)-methylcytidine(1402) in 16S rRNA + S-adenosyl-L-homocysteine + H(+). Functionally, specifically methylates the N4 position of cytidine in position 1402 (C1402) of 16S rRNA. In Clostridium botulinum (strain ATCC 19397 / Type A), this protein is Ribosomal RNA small subunit methyltransferase H.